The primary structure comprises 188 residues: GTP cyclohydrolase 1 (188 aa).

Zn(2+) contacts are provided by Cys78, His81, and Cys150.

The protein belongs to the GTP cyclohydrolase I family. Toroid-shaped homodecamer, composed of two pentamers of five dimers.

It carries out the reaction GTP + H2O = 7,8-dihydroneopterin 3'-triphosphate + formate + H(+). It participates in cofactor biosynthesis; 7,8-dihydroneopterin triphosphate biosynthesis; 7,8-dihydroneopterin triphosphate from GTP: step 1/1. This Halalkalibacterium halodurans (strain ATCC BAA-125 / DSM 18197 / FERM 7344 / JCM 9153 / C-125) (Bacillus halodurans) protein is GTP cyclohydrolase 1.